The primary structure comprises 364 residues: Lipid-A-disaccharide synthase (364 aa).

It belongs to the LpxB family.

It carries out the reaction a lipid X + a UDP-2-N,3-O-bis[(3R)-3-hydroxyacyl]-alpha-D-glucosamine = a lipid A disaccharide + UDP + H(+). The protein operates within bacterial outer membrane biogenesis; LPS lipid A biosynthesis. Its function is as follows. Condensation of UDP-2,3-diacylglucosamine and 2,3-diacylglucosamine-1-phosphate to form lipid A disaccharide, a precursor of lipid A, a phosphorylated glycolipid that anchors the lipopolysaccharide to the outer membrane of the cell. In Campylobacter jejuni (strain RM1221), this protein is Lipid-A-disaccharide synthase.